The sequence spans 189 residues: Elongation factor P (189 aa).

This sequence belongs to the elongation factor P family.

The protein localises to the cytoplasm. Its pathway is protein biosynthesis; polypeptide chain elongation. Functionally, involved in peptide bond synthesis. Stimulates efficient translation and peptide-bond synthesis on native or reconstituted 70S ribosomes in vitro. Probably functions indirectly by altering the affinity of the ribosome for aminoacyl-tRNA, thus increasing their reactivity as acceptors for peptidyl transferase. This is Elongation factor P from Rhizobium radiobacter (Agrobacterium tumefaciens).